A 240-amino-acid chain; its full sequence is DNA repair protein RecO (240 aa).

This sequence belongs to the RecO family.

Involved in DNA repair and RecF pathway recombination. This chain is DNA repair protein RecO, found in Pseudoalteromonas atlantica (strain T6c / ATCC BAA-1087).